Here is an 85-residue protein sequence, read N- to C-terminus: SKP1-like protein 6 (85 aa).

The segment at 65 to 85 (MMAANYLNIQSLLDLTFSNCR) is interaction with the F-box domain of F-box proteins.

This sequence belongs to the SKP1 family. Part of a SCF (SKP1-cullin-F-box) protein ligase complex.

The protein localises to the nucleus. It participates in protein modification; protein ubiquitination. Functionally, involved in ubiquitination and subsequent proteasomal degradation of target proteins. Together with CUL1, RBX1 and a F-box protein, it forms a SCF E3 ubiquitin ligase complex. The functional specificity of this complex depends on the type of F-box protein. In the SCF complex, it serves as an adapter that links the F-box protein to CUL1. The protein is SKP1-like protein 6 (ASK6) of Arabidopsis thaliana (Mouse-ear cress).